The chain runs to 140 residues: Large ribosomal subunit protein uL16 (140 aa).

It belongs to the universal ribosomal protein uL16 family. In terms of assembly, part of the 50S ribosomal subunit.

Binds 23S rRNA and is also seen to make contacts with the A and possibly P site tRNAs. The polypeptide is Large ribosomal subunit protein uL16 (Amoebophilus asiaticus (strain 5a2)).